A 135-amino-acid chain; its full sequence is Ribonuclease P protein component (135 aa).

This sequence belongs to the RnpA family. As to quaternary structure, consists of a catalytic RNA component (M1 or rnpB) and a protein subunit.

It carries out the reaction Endonucleolytic cleavage of RNA, removing 5'-extranucleotides from tRNA precursor.. Its function is as follows. RNaseP catalyzes the removal of the 5'-leader sequence from pre-tRNA to produce the mature 5'-terminus. It can also cleave other RNA substrates such as 4.5S RNA. The protein component plays an auxiliary but essential role in vivo by binding to the 5'-leader sequence and broadening the substrate specificity of the ribozyme. The sequence is that of Ribonuclease P protein component from Pseudomonas aeruginosa (strain ATCC 15692 / DSM 22644 / CIP 104116 / JCM 14847 / LMG 12228 / 1C / PRS 101 / PAO1).